Here is a 531-residue protein sequence, read N- to C-terminus: O-phosphoserine--tRNA(Cys) ligase (531 aa).

Residues 189–191 (HMT), 234–236 (SAS), 276–277 (YY), and N319 each bind substrate.

Belongs to the class-II aminoacyl-tRNA synthetase family. O-phosphoseryl-tRNA(Cys) synthetase subfamily. As to quaternary structure, homotetramer. Interacts with SepCysS.

It catalyses the reaction tRNA(Cys) + O-phospho-L-serine + ATP = O-phospho-L-seryl-tRNA(Cys) + AMP + diphosphate. Functionally, catalyzes the attachment of O-phosphoserine (Sep) to tRNA(Cys). This chain is O-phosphoserine--tRNA(Cys) ligase, found in Methanoculleus marisnigri (strain ATCC 35101 / DSM 1498 / JR1).